A 247-amino-acid polypeptide reads, in one-letter code: MRYLDLNIKSILADWEIADAIRELIANAIDEHRLSNTAFPVIELQKGFLNSSLVIKDYGRGIKSNHFIQNESREKVQSEKTIGKFGIGLKDAIAVLFRHNVKVSFTSSEGTFTPVERMKEGMKDGTKTIQITVDETKKIDKGTDILISKISRSDYEKAIAIFLELRTGYQKLASSKKGDIYRSENGSEIFLNGMKIGTDENFLFSYDIKEPNKKLQKSLNRERKTLSRDSYRDNIISILKSSINKNT.

The protein to M.pneumoniae MPN_635 N-terminal region.

This is an uncharacterized protein from Mycoplasma pneumoniae (strain ATCC 29342 / M129 / Subtype 1) (Mycoplasmoides pneumoniae).